The following is a 371-amino-acid chain: Protein SOMBRERO (371 aa).

An NAC domain is found at 17 to 166; it reads VPPGFRFHPT…GWVVCRVFKK (150 aa). The DNA-binding element occupies 118 to 172; that stretch reads IGLRKTLVFYTGRAPHGQKTEWIMHEYRLDDSENEIQEDGWVVCRVFKKKNHFRG. Disordered regions lie at residues 176 to 213 and 316 to 355; these read EQEQ…LILH and VQNH…NQRF. Over residues 192 to 201 the composition is skewed to basic and acidic residues; it reads NDHDHHHHID. Low complexity-rich tracts occupy residues 202–213 and 340–349; these read SNSNNHSPLILH and GNNNGGSSSS.

In terms of tissue distribution, accumulates in maturing root cap cells, in both COL and LRC cells.

Its subcellular location is the nucleus. In terms of biological role, transcription regulator. Together with BRN1 and BRN2, regulates cellular maturation of root cap. Represses stem cell-like divisions in the root cap daughter cells, and thus promotes daughter cell fate. Inhibits expression of its positive regulator FEZ in a feedback loop for controlled switches in cell division plane. Promotes the expression of genes involved in secondary cell walls (SCW) biosynthesis. The sequence is that of Protein SOMBRERO (SMB) from Arabidopsis thaliana (Mouse-ear cress).